Reading from the N-terminus, the 453-residue chain is Probable glycine dehydrogenase (decarboxylating) subunit 1 (453 aa).

The protein belongs to the GcvP family. N-terminal subunit subfamily. The glycine cleavage system is composed of four proteins: P, T, L and H. In this organism, the P 'protein' is a heterodimer of two subunits.

The enzyme catalyses N(6)-[(R)-lipoyl]-L-lysyl-[glycine-cleavage complex H protein] + glycine + H(+) = N(6)-[(R)-S(8)-aminomethyldihydrolipoyl]-L-lysyl-[glycine-cleavage complex H protein] + CO2. In terms of biological role, the glycine cleavage system catalyzes the degradation of glycine. The P protein binds the alpha-amino group of glycine through its pyridoxal phosphate cofactor; CO(2) is released and the remaining methylamine moiety is then transferred to the lipoamide cofactor of the H protein. The protein is Probable glycine dehydrogenase (decarboxylating) subunit 1 of Erythrobacter litoralis (strain HTCC2594).